The chain runs to 306 residues: tRNA pseudouridine synthase B (306 aa).

The Nucleophile role is filled by Asp-47.

Belongs to the pseudouridine synthase TruB family. Type 1 subfamily.

It catalyses the reaction uridine(55) in tRNA = pseudouridine(55) in tRNA. Its function is as follows. Responsible for synthesis of pseudouridine from uracil-55 in the psi GC loop of transfer RNAs. In Neisseria gonorrhoeae (strain ATCC 700825 / FA 1090), this protein is tRNA pseudouridine synthase B.